A 398-amino-acid chain; its full sequence is Putative glutamate--cysteine ligase 2 (398 aa).

It belongs to the glutamate--cysteine ligase type 2 family. YbdK subfamily.

The catalysed reaction is L-cysteine + L-glutamate + ATP = gamma-L-glutamyl-L-cysteine + ADP + phosphate + H(+). Its function is as follows. ATP-dependent carboxylate-amine ligase which exhibits weak glutamate--cysteine ligase activity. The polypeptide is Putative glutamate--cysteine ligase 2 (Micrococcus luteus (strain ATCC 4698 / DSM 20030 / JCM 1464 / CCM 169 / CCUG 5858 / IAM 1056 / NBRC 3333 / NCIMB 9278 / NCTC 2665 / VKM Ac-2230) (Micrococcus lysodeikticus)).